Reading from the N-terminus, the 88-residue chain is Large ribosomal subunit protein eL34 (88 aa).

This sequence belongs to the eukaryotic ribosomal protein eL34 family.

This Methanobrevibacter smithii (strain ATCC 35061 / DSM 861 / OCM 144 / PS) protein is Large ribosomal subunit protein eL34.